We begin with the raw amino-acid sequence, 245 residues long: Triosephosphate isomerase (245 aa).

9–11 is a substrate binding site; that stretch reads NWK. The active-site Electrophile is His-92. Glu-164 acts as the Proton acceptor in catalysis. Substrate is bound by residues Gly-170, Ser-209, and 230–231; that span reads GG.

Belongs to the triosephosphate isomerase family. In terms of assembly, homodimer.

It is found in the cytoplasm. The enzyme catalyses D-glyceraldehyde 3-phosphate = dihydroxyacetone phosphate. Its pathway is carbohydrate biosynthesis; gluconeogenesis. It functions in the pathway carbohydrate degradation; glycolysis; D-glyceraldehyde 3-phosphate from glycerone phosphate: step 1/1. Involved in the gluconeogenesis. Catalyzes stereospecifically the conversion of dihydroxyacetone phosphate (DHAP) to D-glyceraldehyde-3-phosphate (G3P). The chain is Triosephosphate isomerase from Cupriavidus pinatubonensis (strain JMP 134 / LMG 1197) (Cupriavidus necator (strain JMP 134)).